Reading from the N-terminus, the 206-residue chain is Imidazoleglycerol-phosphate dehydratase (206 aa).

The protein belongs to the imidazoleglycerol-phosphate dehydratase family.

The protein localises to the cytoplasm. The enzyme catalyses D-erythro-1-(imidazol-4-yl)glycerol 3-phosphate = 3-(imidazol-4-yl)-2-oxopropyl phosphate + H2O. The protein operates within amino-acid biosynthesis; L-histidine biosynthesis; L-histidine from 5-phospho-alpha-D-ribose 1-diphosphate: step 6/9. The polypeptide is Imidazoleglycerol-phosphate dehydratase (Leptospira borgpetersenii serovar Hardjo-bovis (strain JB197)).